Reading from the N-terminus, the 79-residue chain is Cell division topological specificity factor (79 aa).

This sequence belongs to the MinE family.

Its function is as follows. Prevents the cell division inhibition by proteins MinC and MinD at internal division sites while permitting inhibition at polar sites. This ensures cell division at the proper site by restricting the formation of a division septum at the midpoint of the long axis of the cell. The chain is Cell division topological specificity factor from Nitratiruptor sp. (strain SB155-2).